The sequence spans 101 residues: Small ribosomal subunit protein uS14 (101 aa).

This sequence belongs to the universal ribosomal protein uS14 family. In terms of assembly, part of the 30S ribosomal subunit. Contacts proteins S3 and S10.

Its function is as follows. Binds 16S rRNA, required for the assembly of 30S particles and may also be responsible for determining the conformation of the 16S rRNA at the A site. This is Small ribosomal subunit protein uS14 from Acinetobacter baylyi (strain ATCC 33305 / BD413 / ADP1).